The primary structure comprises 1289 residues: uncharacterized protein (1289 aa).

The signal sequence occupies residues 1–23 (MRKYTVIASILLSFLSVLSGGHH). Residues 141-277 (EGYQADLAHI…VVISTNTGKD (137 aa)) form the LTD domain.

This is an uncharacterized protein from Bacillus subtilis (strain 168).